We begin with the raw amino-acid sequence, 570 residues long: Putative ABC transporter ATP-binding protein SAV2684 (570 aa).

ABC transporter domains are found at residues 6-247 and 304-537; these read ISFK…GIRE and LELN…ASLR. ATP-binding positions include 40–47 and 338–345; these read GASGSGKS and GHNGAGKS.

This sequence belongs to the ABC transporter superfamily.

The protein resides in the cell membrane. In terms of biological role, probably part of an ABC transporter complex. Responsible for energy coupling to the transport system. The polypeptide is Putative ABC transporter ATP-binding protein SAV2684 (Staphylococcus aureus (strain Mu50 / ATCC 700699)).